The sequence spans 209 residues: Small ribosomal subunit protein uS4 (209 aa).

A compositionally biased stretch (basic residues) spans 1–13 (MSTKSRTRSKTRL). Disordered stretches follow at residues 1–20 (MSTK…LGIP) and 28–49 (YLEK…QDSD). Residues 95–160 (QRLDALVVRS…TEPFQVAAAG (66 aa)) form the S4 RNA-binding domain.

The protein belongs to the universal ribosomal protein uS4 family. In terms of assembly, part of the 30S ribosomal subunit. Contacts protein S5. The interaction surface between S4 and S5 is involved in control of translational fidelity.

In terms of biological role, one of the primary rRNA binding proteins, it binds directly to 16S rRNA where it nucleates assembly of the body of the 30S subunit. Functionally, with S5 and S12 plays an important role in translational accuracy. The chain is Small ribosomal subunit protein uS4 from Clavibacter sepedonicus (Clavibacter michiganensis subsp. sepedonicus).